The following is a 133-amino-acid chain: Ribosome-binding factor A (133 aa).

This sequence belongs to the RbfA family. In terms of assembly, monomer. Binds 30S ribosomal subunits, but not 50S ribosomal subunits or 70S ribosomes.

The protein localises to the cytoplasm. One of several proteins that assist in the late maturation steps of the functional core of the 30S ribosomal subunit. Associates with free 30S ribosomal subunits (but not with 30S subunits that are part of 70S ribosomes or polysomes). Required for efficient processing of 16S rRNA. May interact with the 5'-terminal helix region of 16S rRNA. The chain is Ribosome-binding factor A from Synechocystis sp. (strain ATCC 27184 / PCC 6803 / Kazusa).